The chain runs to 300 residues: Protein p34 (300 aa).

Helical transmembrane passes span 14-34 (YLSV…WVVT), 39-59 (ILAS…NLVA), 87-107 (SIFF…SLFI), 119-139 (IIMY…TYVI), and 170-190 (LSDY…LYIF).

This sequence belongs to the cation diffusion facilitator (CDF) transporter (TC 2.A.4) family.

The protein localises to the cell membrane. This Rickettsia prowazekii (strain Madrid E) protein is Protein p34 (p34).